Here is a 249-residue protein sequence, read N- to C-terminus: Triosephosphate isomerase (249 aa).

Position 9–11 (9–11) interacts with substrate; it reads NWK. The active-site Electrophile is His-94. Glu-166 serves as the catalytic Proton acceptor. Residues Gly-172, Ser-211, and 232 to 233 each bind substrate; that span reads GG.

It belongs to the triosephosphate isomerase family. As to quaternary structure, homodimer.

It localises to the cytoplasm. The enzyme catalyses D-glyceraldehyde 3-phosphate = dihydroxyacetone phosphate. It functions in the pathway carbohydrate biosynthesis; gluconeogenesis. Its pathway is carbohydrate degradation; glycolysis; D-glyceraldehyde 3-phosphate from glycerone phosphate: step 1/1. Involved in the gluconeogenesis. Catalyzes stereospecifically the conversion of dihydroxyacetone phosphate (DHAP) to D-glyceraldehyde-3-phosphate (G3P). This Moorella thermoacetica (strain ATCC 39073 / JCM 9320) protein is Triosephosphate isomerase.